We begin with the raw amino-acid sequence, 37 residues long: Large ribosomal subunit protein bL36 (37 aa).

Belongs to the bacterial ribosomal protein bL36 family.

The polypeptide is Large ribosomal subunit protein bL36 (Thermosynechococcus vestitus (strain NIES-2133 / IAM M-273 / BP-1)).